Consider the following 252-residue polypeptide: tRNA-cytidine(32) 2-sulfurtransferase (252 aa).

Positions 37 to 42 (SGGKDS) match the PP-loop motif motif. The [4Fe-4S] cluster site is built by Cys-112, Cys-115, and Cys-202.

Belongs to the TtcA family. Homodimer. Mg(2+) serves as cofactor. Requires [4Fe-4S] cluster as cofactor.

It is found in the cytoplasm. The catalysed reaction is cytidine(32) in tRNA + S-sulfanyl-L-cysteinyl-[cysteine desulfurase] + AH2 + ATP = 2-thiocytidine(32) in tRNA + L-cysteinyl-[cysteine desulfurase] + A + AMP + diphosphate + H(+). It participates in tRNA modification. Functionally, catalyzes the ATP-dependent 2-thiolation of cytidine in position 32 of tRNA, to form 2-thiocytidine (s(2)C32). The sulfur atoms are provided by the cysteine/cysteine desulfurase (IscS) system. The chain is tRNA-cytidine(32) 2-sulfurtransferase from Geotalea daltonii (strain DSM 22248 / JCM 15807 / FRC-32) (Geobacter daltonii).